A 393-amino-acid chain; its full sequence is Argininosuccinate synthase (393 aa).

Residues 7–15 (AYSGGLDTS) and alanine 34 contribute to the ATP site. L-citrulline is bound by residues tyrosine 85 and serine 90. Glycine 115 is an ATP binding site. Residues threonine 117, asparagine 121, and aspartate 122 each coordinate L-aspartate. Asparagine 121 contributes to the L-citrulline binding site. Residues arginine 125, serine 176, serine 185, glutamate 261, and tyrosine 273 each coordinate L-citrulline.

Belongs to the argininosuccinate synthase family. Type 1 subfamily. In terms of assembly, homotetramer.

It localises to the cytoplasm. It catalyses the reaction L-citrulline + L-aspartate + ATP = 2-(N(omega)-L-arginino)succinate + AMP + diphosphate + H(+). It functions in the pathway amino-acid biosynthesis; L-arginine biosynthesis; L-arginine from L-ornithine and carbamoyl phosphate: step 2/3. The polypeptide is Argininosuccinate synthase (Ehrlichia canis (strain Jake)).